The chain runs to 368 residues: Protein NDRG2 (368 aa).

The segment covering 330–339 has biased composition (low complexity); it reads SLSSSYSMEG. The disordered stretch occupies residues 330 to 368; the sequence is SLSSSYSMEGSRSRSRTLSQGSQGGQLPPSPSNTMEVSC.

The protein belongs to the NDRG family.

The protein localises to the cytoplasm. Functionally, contributes to the regulation of the Wnt signaling pathway. Down-regulates CTNNB1-mediated transcriptional activation of target genes. May be involved in neuron differentiation. The sequence is that of Protein NDRG2 (ndrg2) from Danio rerio (Zebrafish).